The following is a 247-amino-acid chain: Lys-63-specific deubiquitinase BRCC36 (247 aa).

Ala2 is modified (N-acetylalanine). In terms of domain architecture, MPN spans 12–179; sequence VHLESDAFLV…YTCFQSIQAQ (168 aa). Residues His122, His124, and Asp135 each coordinate Zn(2+). The short motif at 122 to 135 is the JAMM motif element; it reads HSHPHITVWPSHVD. Residue Ser189 is modified to Phosphoserine.

This sequence belongs to the peptidase M67A family. BRCC36 subfamily. As to quaternary structure, component of the ARISC complex, at least composed of UIMC1/RAP80, ABRAXAS1, BRCC3/BRCC36, BABAM2 and BABAM1/NBA1. Component of the BRCA1-A complex, at least composed of BRCA1, BARD1, UIMC1/RAP80, ABRAXAS1, BRCC3/BRCC36, BABAM2 and BABAM1/NBA1. In the BRCA1-A complex, interacts directly with ABRAXAS1 and BABAM2. Component of the BRISC complex, at least composed of ABRAXAS2, BRCC3/BRCC36, BABAM2 and BABAM1/NBA1. Identified in a complex with SHMT2 and the other subunits of the BRISC complex. In the BRISC complex, interacts directly with ABRAXAS2. Identified in a complex with ABRAXAS2 and NUMA1. The BRISC complex interacts with the CSN complex. Component of the BRCA1/BRCA2 containing complex (BRCC), which also contains BRCA1, BRCA2, BARD1, BABAM2 and RAD51. BRCC is a ubiquitin E3 ligase complex that enhances cellular survival following DNA damage. Interacts with BRCA1. Binds polyubiquitin. Interacts with PWWP2B. Interacts with HDAC1; this interaction is enhanced in the presence of PWWP2B. Requires Zn(2+) as cofactor.

The protein localises to the nucleus. The protein resides in the cytoplasm. It localises to the cytoskeleton. Its subcellular location is the spindle pole. Its function is as follows. Metalloprotease that specifically cleaves 'Lys-63'-linked polyubiquitin chains. Does not have activity toward 'Lys-48'-linked polyubiquitin chains. Component of the BRCA1-A complex, a complex that specifically recognizes 'Lys-63'-linked ubiquitinated histones H2A and H2AX at DNA lesions sites, leading to target the BRCA1-BARD1 heterodimer to sites of DNA damage at double-strand breaks (DSBs). In the BRCA1-A complex, it specifically removes 'Lys-63'-linked ubiquitin on histones H2A and H2AX, antagonizing the RNF8-dependent ubiquitination at double-strand breaks (DSBs). Catalytic subunit of the BRISC complex, a multiprotein complex that specifically cleaves 'Lys-63'-linked ubiquitin in various substrates. Mediates the specific 'Lys-63'-specific deubiquitination associated with the COP9 signalosome complex (CSN), via the interaction of the BRISC complex with the CSN complex. The BRISC complex is required for normal mitotic spindle assembly and microtubule attachment to kinetochores via its role in deubiquitinating NUMA1. Plays a role in interferon signaling via its role in the deubiquitination of the interferon receptor IFNAR1; deubiquitination increases IFNAR1 activity by enhancing its stability and cell surface expression. Acts as a regulator of the NLRP3 inflammasome by mediating deubiquitination of NLRP3, leading to NLRP3 inflammasome assembly. Down-regulates the response to bacterial lipopolysaccharide (LPS) via its role in IFNAR1 deubiquitination. Deubiquitinates HDAC1 and PWWP2B leading to their stabilization. This chain is Lys-63-specific deubiquitinase BRCC36 (BRCC3), found in Pongo abelii (Sumatran orangutan).